Reading from the N-terminus, the 414-residue chain is Enterobactin exporter EntS (414 aa).

Over 1 to 21 (MNRQSWLLNLSLLKTHPAFRA) the chain is Cytoplasmic. The helical transmembrane segment at 22 to 42 (VFLARFISIVSLGLLGVAVPV) threads the bilayer. Residues 43–55 (QIQMMTHSTWQVG) lie on the Periplasmic side of the membrane. The helical transmembrane segment at 56-76 (LSVTLTGGAMFIGLMVGGVLA) threads the bilayer. The Cytoplasmic segment spans residues 77–83 (DRYERKK). Residues 84 to 104 (VILLARGTCGIGFIGLCVNAL) traverse the membrane as a helical segment. At 105 to 109 (LPEPS) the chain is on the periplasmic side. A helical transmembrane segment spans residues 110–130 (LLAIYLLGLWDGFFASLGVTA). Over 131–156 (LLAATPALVGRENLMQAGAITMLTVR) the chain is Cytoplasmic. Residues 157-177 (LGSVISPMLGGILLASGGVAW) form a helical membrane-spanning segment. Residue asparagine 178 is a topological domain, periplasmic. A helical transmembrane segment spans residues 179–199 (YGLAAAGTFITLLPLLTLPRL). Residues 200-218 (PVPPQPRENPFIALLAAFR) lie on the Cytoplasmic side of the membrane. Residues 219 to 239 (FLLASPLIGGIALLGGLVTMA) traverse the membrane as a helical segment. At 240–256 (SAVRVLYPALAMSWQMS) the chain is on the periplasmic side. Residues 257-277 (AAQIGLLYAAIPLGAAIGALT) traverse the membrane as a helical segment. At 278–287 (SGQLAHSVRP) the chain is on the cytoplasmic side. The chain crosses the membrane as a helical span at residues 288 to 307 (GLIMLVSTVGSFLAVGLFAI). Residues 308 to 313 (MPIWIA) lie on the Periplasmic side of the membrane. A helical membrane pass occupies residues 314–336 (GVICLALFGWLSAISSLLQYTLL). The Cytoplasmic portion of the chain corresponds to 337 to 356 (QTQTPENMLGRMNGLWTAQN). The helical transmembrane segment at 357-377 (VTGDAIGAALLGGLGAMMTPV) threads the bilayer. Alanine 378 is a topological domain (periplasmic). The chain crosses the membrane as a helical span at residues 379–399 (SASVSGFGLVIIGLLLLLVLG). Residues 400 to 414 (ELRRFRQTPPVSDAG) are Cytoplasmic-facing.

This sequence belongs to the major facilitator superfamily. EntS (TC 2.A.1.38) family.

The protein resides in the cell inner membrane. Its function is as follows. Component of an export pathway for enterobactin. The sequence is that of Enterobactin exporter EntS from Salmonella typhi.